Reading from the N-terminus, the 89-residue chain is Small ribosomal subunit protein uS15 (89 aa).

This sequence belongs to the universal ribosomal protein uS15 family. As to quaternary structure, part of the 30S ribosomal subunit. Forms a bridge to the 50S subunit in the 70S ribosome, contacting the 23S rRNA.

Functionally, one of the primary rRNA binding proteins, it binds directly to 16S rRNA where it helps nucleate assembly of the platform of the 30S subunit by binding and bridging several RNA helices of the 16S rRNA. Forms an intersubunit bridge (bridge B4) with the 23S rRNA of the 50S subunit in the ribosome. In Staphylococcus saprophyticus subsp. saprophyticus (strain ATCC 15305 / DSM 20229 / NCIMB 8711 / NCTC 7292 / S-41), this protein is Small ribosomal subunit protein uS15.